The chain runs to 200 residues: A-type ATP synthase subunit E 3 (200 aa).

This sequence belongs to the V-ATPase E subunit family. In terms of assembly, has multiple subunits with at least A(3), B(3), C, D, E, F, H, I and proteolipid K(x).

Its subcellular location is the cell membrane. Its function is as follows. Component of the A-type ATP synthase that produces ATP from ADP in the presence of a proton gradient across the membrane. The polypeptide is A-type ATP synthase subunit E 3 (Methanospirillum hungatei JF-1 (strain ATCC 27890 / DSM 864 / NBRC 100397 / JF-1)).